A 348-amino-acid chain; its full sequence is Protein RecA (348 aa).

66–73 (GPESSGKT) provides a ligand contact to ATP.

The protein belongs to the RecA family.

The protein localises to the cytoplasm. Can catalyze the hydrolysis of ATP in the presence of single-stranded DNA, the ATP-dependent uptake of single-stranded DNA by duplex DNA, and the ATP-dependent hybridization of homologous single-stranded DNAs. It interacts with LexA causing its activation and leading to its autocatalytic cleavage. The protein is Protein RecA of Legionella pneumophila (strain Lens).